The sequence spans 454 residues: MSHKKVVAISESSSDEEVPVAPPTAPPKKRQRKAVEEPRGHQAMVEIARQATAALKARGDPGSIIVQTFCDQTVDVDKEGNVIFTPAKQKSICNKSGSPLASVASKIFKASEHKWQSAMEFALKVLNAYQVDHSKLTLLPDEGTLECFKKAVQAYITTSKMHVTYTFTNQKTFLHVAGRLLLDFVIKAAELAPGVNPSGCVVWQHGCQSSLMCLHGSPMIQKEQLVEMDVNSENAQRALKENPEKTKIVSNRWGRNVVQFKNEDAFCCSMDVNMSGGNFSGASCGMFYTDGPKAIMAFQQIMAFLKACYPSMPNAESHLLMPLKCECNWNSSLPLLGRQTCKITPFSLASANHIDKSEVDDQKMLATLNNPAMLVFQCCNPVYRNSKAAPQKNCDFKISSVDLVSCLQIAKQIWLSTVGEKPPVKFPEFHWSDEHRYQTTILPQGQHDDDLVLF.

The disordered stretch occupies residues 1-41 (MSHKKVVAISESSSDEEVPVAPPTAPPKKRQRKAVEEPRGH). At Tyr129 the chain carries Phosphotyrosine; by host. Positions 213 and 215 each coordinate Zn(2+). Residues 226-260 (VEMDVNSENAQRALKENPEKTKIVSNRWGRNVVQF) are flexible loop. Zn(2+) contacts are provided by Cys268, Cys284, Cys325, Cys327, Cys378, and Cys394. Residues 440–454 (TILPQGQHDDDLVLF) are C-terminal arm, DBP binding.

This sequence belongs to the adenoviridae E2A DNA-binding protein family. Homomultimerizes on viral ssDNA bound to pTP. Forms a initiation complex with viral polymerase, pTP and hosts NFIA and POU2F1/OCT1. Interacts with host SRCAP.

It is found in the host nucleus. Plays a role in the elongation phase of viral strand displacement replication by unwinding the template in an ATP-independent fashion, employing its capacity to form multimers. Also enhances the rate of initiation. Released from template upon second strand synthesis. Assembles in complex with viral pTP, viral pol, host NFIA and host POU2F1/OCT1 on viral origin of replication. Covers the whole ssDNA genome during synthesis. The complementary strand synthesis induces its relese from DNA template. May inhibit cellular transcription mediated by the interaction between host SRCAP and CBP. This is DNA-binding protein from Canine adenovirus serotype 1 (strain RI261) (CAdV-1).